Reading from the N-terminus, the 548-residue chain is Glucose-6-phosphate isomerase 1 (548 aa).

The active-site Proton donor is the Glu353. Active-site residues include His384 and Lys512.

The protein belongs to the GPI family.

Its subcellular location is the cytoplasm. It carries out the reaction alpha-D-glucose 6-phosphate = beta-D-fructose 6-phosphate. The protein operates within carbohydrate biosynthesis; gluconeogenesis. It participates in carbohydrate degradation; glycolysis; D-glyceraldehyde 3-phosphate and glycerone phosphate from D-glucose: step 2/4. In terms of biological role, catalyzes the reversible isomerization of glucose-6-phosphate to fructose-6-phosphate. In Neisseria meningitidis serogroup A / serotype 4A (strain DSM 15465 / Z2491), this protein is Glucose-6-phosphate isomerase 1.